Reading from the N-terminus, the 305-residue chain is Ribonuclease BN (305 aa).

Positions 64, 66, 68, 69, 141, 212, and 270 each coordinate Zn(2+). Catalysis depends on Asp-68, which acts as the Proton acceptor.

This sequence belongs to the RNase Z family. RNase BN subfamily. As to quaternary structure, homodimer. The cofactor is Zn(2+).

In terms of biological role, zinc phosphodiesterase, which has both exoribonuclease and endoribonuclease activities. This chain is Ribonuclease BN, found in Escherichia coli O6:K15:H31 (strain 536 / UPEC).